A 357-amino-acid polypeptide reads, in one-letter code: Peptide chain release factor 1 (357 aa).

Gln-236 carries the N5-methylglutamine modification.

This sequence belongs to the prokaryotic/mitochondrial release factor family. Methylated by PrmC. Methylation increases the termination efficiency of RF1.

It localises to the cytoplasm. In terms of biological role, peptide chain release factor 1 directs the termination of translation in response to the peptide chain termination codons UAG and UAA. This chain is Peptide chain release factor 1, found in Mycolicibacterium vanbaalenii (strain DSM 7251 / JCM 13017 / BCRC 16820 / KCTC 9966 / NRRL B-24157 / PYR-1) (Mycobacterium vanbaalenii).